An 88-amino-acid chain; its full sequence is MAQKTFTVTADSGIHARPATTLVQAASKFDSDINLEFNGKTVNLKSIMGVMSLGIQKGATITISAEGSDEADALAALEDTMSKEGLGE.

The HPr domain occupies 1-88 (MAQKTFTVTA…DTMSKEGLGE (88 aa)). Ser-12 carries the phosphoserine modification. The active-site Pros-phosphohistidine intermediate is His-15. Ser-46 is subject to Phosphoserine; by HPrK/P.

Belongs to the HPr family.

It is found in the cytoplasm. With respect to regulation, phosphorylation on Ser-46 inhibits the phosphoryl transfer from enzyme I to HPr. Its function is as follows. General (non sugar-specific) component of the phosphoenolpyruvate-dependent sugar phosphotransferase system (sugar PTS). This major carbohydrate active-transport system catalyzes the phosphorylation of incoming sugar substrates concomitantly with their translocation across the cell membrane. The phosphoryl group from phosphoenolpyruvate (PEP) is transferred to the phosphoryl carrier protein HPr by enzyme I. Phospho-HPr then transfers it to the PTS EIIA domain. In terms of biological role, P-Ser-HPr interacts with the catabolite control protein A (CcpA), forming a complex that binds to DNA at the catabolite response elements cre, operator sites preceding a large number of catabolite-regulated genes. Thus, P-Ser-HPr is a corepressor in carbon catabolite repression (CCR), a mechanism that allows bacteria to coordinate and optimize the utilization of available carbon sources. P-Ser-HPr also plays a role in inducer exclusion, in which it probably interacts with several non-PTS permeases and inhibits their transport activity. The chain is Phosphocarrier protein HPr (ptsH) from Priestia megaterium (Bacillus megaterium).